Reading from the N-terminus, the 291-residue chain is Putative ribosomal protein uL16-like, mitochondrial (291 aa).

The N-terminal 27 residues, 1–27 (MQRFMFSRVVEHQRQISRGFLSLVPSL), are a transit peptide targeting the mitochondrion. Residues 127-137 (VHETSNNEKKQ) show a composition bias toward basic and acidic residues. The tract at residues 127-173 (VHETSNNEKKQQKQKSSVNEKKPKKKKKSSISDIPRRTKFQKHHRGR) is disordered. Residues 163 to 173 (RTKFQKHHRGR) are compositionally biased toward basic residues.

This sequence belongs to the universal ribosomal protein uL16 family.

The protein resides in the mitochondrion. Its function is as follows. Could be a component of the large subunit of mitochondrial ribosome. The sequence is that of Putative ribosomal protein uL16-like, mitochondrial from Arabidopsis thaliana (Mouse-ear cress).